An 835-amino-acid polypeptide reads, in one-letter code: Phenylalanine--tRNA ligase beta subunit (835 aa).

Residues 44-158 (GPVDGPLTVG…LPGADGADVL (115 aa)) form the tRNA-binding domain. The region spanning 414–493 (WSLPPIRIAV…RLEGLEVIRS (80 aa)) is the B5 domain. D471, D477, E480, and E481 together coordinate Mg(2+). Residues 741–834 (SPFPAVLQDV…AAERVGATLR (94 aa)) form the FDX-ACB domain.

This sequence belongs to the phenylalanyl-tRNA synthetase beta subunit family. Type 1 subfamily. In terms of assembly, tetramer of two alpha and two beta subunits. Mg(2+) serves as cofactor.

Its subcellular location is the cytoplasm. It catalyses the reaction tRNA(Phe) + L-phenylalanine + ATP = L-phenylalanyl-tRNA(Phe) + AMP + diphosphate + H(+). In Mycobacterium leprae (strain TN), this protein is Phenylalanine--tRNA ligase beta subunit.